A 438-amino-acid polypeptide reads, in one-letter code: ATP-dependent protease ATPase subunit HslU (438 aa).

ATP contacts are provided by residues Val18, 60–65 (GVGKTE), Asp252, Glu317, and Arg389.

The protein belongs to the ClpX chaperone family. HslU subfamily. A double ring-shaped homohexamer of HslV is capped on each side by a ring-shaped HslU homohexamer. The assembly of the HslU/HslV complex is dependent on binding of ATP.

It is found in the cytoplasm. Functionally, ATPase subunit of a proteasome-like degradation complex; this subunit has chaperone activity. The binding of ATP and its subsequent hydrolysis by HslU are essential for unfolding of protein substrates subsequently hydrolyzed by HslV. HslU recognizes the N-terminal part of its protein substrates and unfolds these before they are guided to HslV for hydrolysis. The polypeptide is ATP-dependent protease ATPase subunit HslU (Saccharophagus degradans (strain 2-40 / ATCC 43961 / DSM 17024)).